Reading from the N-terminus, the 148-residue chain is tRNA-specific adenosine deaminase (148 aa).

Residues 1 to 116 form the CMP/dCMP-type deaminase domain; that stretch reads MEQALKQARL…SNLRYFNSSA (116 aa). A Zn(2+)-binding site is contributed by His48. Glu50 functions as the Proton donor in the catalytic mechanism. Positions 78 and 81 each coordinate Zn(2+).

This sequence belongs to the cytidine and deoxycytidylate deaminase family. Homodimer. It depends on Zn(2+) as a cofactor.

It carries out the reaction adenosine(34) in tRNA + H2O + H(+) = inosine(34) in tRNA + NH4(+). Its function is as follows. Catalyzes the deamination of adenosine to inosine at the wobble position 34 of tRNA(Arg2). The chain is tRNA-specific adenosine deaminase from Rickettsia typhi (strain ATCC VR-144 / Wilmington).